A 160-amino-acid chain; its full sequence is Putative 4-hydroxy-4-methyl-2-oxoglutarate aldolase (160 aa).

Residues 78-81 and Arg-100 contribute to the substrate site; that span reads GDVI. Asp-101 provides a ligand contact to a divalent metal cation.

This sequence belongs to the class II aldolase/RraA-like family. As to quaternary structure, homotrimer. Requires a divalent metal cation as cofactor.

It carries out the reaction 4-hydroxy-4-methyl-2-oxoglutarate = 2 pyruvate. It catalyses the reaction oxaloacetate + H(+) = pyruvate + CO2. Functionally, catalyzes the aldol cleavage of 4-hydroxy-4-methyl-2-oxoglutarate (HMG) into 2 molecules of pyruvate. Also contains a secondary oxaloacetate (OAA) decarboxylase activity due to the common pyruvate enolate transition state formed following C-C bond cleavage in the retro-aldol and decarboxylation reactions. This Mycolicibacterium paratuberculosis (strain ATCC BAA-968 / K-10) (Mycobacterium paratuberculosis) protein is Putative 4-hydroxy-4-methyl-2-oxoglutarate aldolase.